The sequence spans 308 residues: Mycothiol acetyltransferase (308 aa).

N-acetyltransferase domains are found at residues 16-152 (ETLA…RPLA) and 165-308 (VTVR…RTES). Position 47 (Glu47) interacts with 1D-myo-inositol 2-(L-cysteinylamino)-2-deoxy-alpha-D-glucopyranoside. 91–93 (LVV) contacts acetyl-CoA. Positions 192, 231, and 240 each coordinate 1D-myo-inositol 2-(L-cysteinylamino)-2-deoxy-alpha-D-glucopyranoside. Acetyl-CoA contacts are provided by residues 244–246 (LGV) and 251–257 (QGGGLGK). 1D-myo-inositol 2-(L-cysteinylamino)-2-deoxy-alpha-D-glucopyranoside is bound at residue Tyr278.

It belongs to the acetyltransferase family. MshD subfamily. Monomer.

The enzyme catalyses 1D-myo-inositol 2-(L-cysteinylamino)-2-deoxy-alpha-D-glucopyranoside + acetyl-CoA = mycothiol + CoA + H(+). Catalyzes the transfer of acetyl from acetyl-CoA to desacetylmycothiol (Cys-GlcN-Ins) to form mycothiol. The protein is Mycothiol acetyltransferase of Streptomyces avermitilis (strain ATCC 31267 / DSM 46492 / JCM 5070 / NBRC 14893 / NCIMB 12804 / NRRL 8165 / MA-4680).